The primary structure comprises 150 residues: Arginine repressor (150 aa).

The protein belongs to the ArgR family.

It is found in the cytoplasm. It functions in the pathway amino-acid biosynthesis; L-arginine biosynthesis [regulation]. Its function is as follows. Regulates arginine biosynthesis genes. This is Arginine repressor from Carboxydothermus hydrogenoformans (strain ATCC BAA-161 / DSM 6008 / Z-2901).